Here is a 177-residue protein sequence, read N- to C-terminus: Alkyl hydroperoxide reductase AhpD (177 aa).

The Proton donor role is filled by Cys130. A disulfide bridge links Cys130 with Cys133. Catalysis depends on Cys133, which acts as the Cysteine sulfenic acid (-SOH) intermediate.

Belongs to the AhpD family. Homotrimer.

It carries out the reaction N(6)-[(R)-dihydrolipoyl]-L-lysyl-[lipoyl-carrier protein] + a hydroperoxide = N(6)-[(R)-lipoyl]-L-lysyl-[lipoyl-carrier protein] + an alcohol + H2O. Functionally, antioxidant protein with alkyl hydroperoxidase activity. Required for the reduction of the AhpC active site cysteine residues and for the regeneration of the AhpC enzyme activity. The polypeptide is Alkyl hydroperoxide reductase AhpD (Mycolicibacterium smegmatis (strain ATCC 700084 / mc(2)155) (Mycobacterium smegmatis)).